The chain runs to 182 residues: CASP-like protein 5B1 (182 aa).

A disordered region spans residues 1–20; sequence GDASHAVDHPIGGHPEHEHD. Residues 1–41 lie on the Cytoplasmic side of the membrane; the sequence is GDASHAVDHPIGGHPEHEHDLREEEGPLIFPMKDLPGTPGT. Residues 42–62 form a helical membrane-spanning segment; sequence VGGLALRMGQFIFAAASVVIM. Topologically, residues 63–73 are extracellular; that stretch reads VTSDEFINFTA. Residue Asn-70 is glycosylated (N-linked (GlcNAc...) asparagine). Residues 74-94 traverse the membrane as a helical segment; that stretch reads FCYLAAAMALQFLWSFVLATI. The Cytoplasmic segment spans residues 95–108; sequence DVYALLIKRGLPNS. Residues 109–129 traverse the membrane as a helical segment; that stretch reads ILLSLFVVGDWVTATLSLAAA. Over 130–159 the chain is Extracellular; the sequence is CSTAGITVLFDKDLNYCDQMHCRRYQLSAT. A helical transmembrane segment spans residues 160 to 180; that stretch reads MAFFSWVLIAISSLITLLLLV. At 181 to 182 the chain is on the cytoplasmic side; it reads SE.

This sequence belongs to the Casparian strip membrane proteins (CASP) family. In terms of assembly, homodimer and heterodimers.

It localises to the cell membrane. This is CASP-like protein 5B1 from Picea sitchensis (Sitka spruce).